Here is a 483-residue protein sequence, read N- to C-terminus: Linamarin synthase 1 (483 aa).

Residue His22 is the Proton acceptor of the active site. An an anthocyanidin-binding site is contributed by His22. The active-site Charge relay is the Asp124. The UDP-alpha-D-glucose site is built by Thr146, Val360, Gln362, His377, Trp380, Asn381, Ser382, and Glu385. An an anthocyanidin-binding site is contributed by Ala400. UDP-alpha-D-glucose-binding residues include Glu401 and Gln402.

This sequence belongs to the UDP-glycosyltransferase family. In terms of tissue distribution, expressed in the cortex, xylem and phloem parenchyma, and in specific cells in the endodermis of the petiole of the first unfolded leaf.

It catalyses the reaction 2-hydroxy-2-methylpropanenitrile + UDP-alpha-D-glucose = linamarin + UDP + H(+). Functionally, UDP-glucosyltransferase catalyzing in planta synthesis of cyanogenic glucosides. Able to glucosylate acetone cyanohydrin and 2-hydroxy-2-methylbutyronitrile, forming linamarin and lotaustralin. Also accepts, to some extent, a wide range of potential acceptor substrates, including simple alcohols, flavonoids, isoflavonoids and other hydroxynitriles such as p-hydroxymandelonitrile, mandelonitrile, (E)-4-hydroxy-2-methylbut-2-enenitrile and (E)- 2-(hydroxymethyl)but-2-enenitrile. The chain is Linamarin synthase 1 from Manihot esculenta (Cassava).